Reading from the N-terminus, the 241-residue chain is Chromosome partition protein MukE (241 aa).

The interval 207–241 (DGEAATPDSLSQEKSAVKNDEEIEDELDEGLGEEE) is disordered. Positions 227 to 241 (EEIEDELDEGLGEEE) are enriched in acidic residues.

It belongs to the MukE family. Interacts, and probably forms a ternary complex, with MukF and MukB. The complex formation is stimulated by calcium or magnesium.

It localises to the cytoplasm. The protein localises to the nucleoid. Involved in chromosome condensation, segregation and cell cycle progression. May participate in facilitating chromosome segregation by condensation DNA from both sides of a centrally located replisome during cell division. Probably acts via its interaction with MukB and MukF. This Mannheimia succiniciproducens (strain KCTC 0769BP / MBEL55E) protein is Chromosome partition protein MukE.